The primary structure comprises 1073 residues: Semaphorin-6D (1073 aa).

The first 20 residues, M1–A20, serve as a signal peptide directing secretion. Residues V21 to N662 lie on the Extracellular side of the membrane. The region spanning D27–L512 is the Sema domain. N51 is a glycosylation site (N-linked (GlcNAc...) asparagine). Disulfide bonds link C108/C118, C136/C145, C259/C370, and C284/C329. A glycan (N-linked (GlcNAc...) asparagine) is linked at N283. N435 and N461 each carry an N-linked (GlcNAc...) asparagine glycan. Cystine bridges form between C477/C506, C515/C533, C521/C568, and C525/C541. The region spanning R514 to H569 is the PSI domain. N631 carries N-linked (GlcNAc...) asparagine glycosylation. The helical transmembrane segment at V663–V683 threads the bilayer. Topologically, residues Y684–Y1073 are cytoplasmic. 3 positions are modified to phosphoserine: S723, S734, and S744. Disordered stretches follow at residues S744–E775, A787–P825, T839–D874, S914–T1005, and L1021–Y1073. A Phosphothreonine modification is found at T773. A compositionally biased stretch (basic and acidic residues) spans S790–T805. A phosphoserine mark is found at S931, S957, and S983. Polar residues predominate over residues S931–T942. Polar residues-rich tracts occupy residues N980–M995 and L1021–L1037.

Belongs to the semaphorin family.

The protein resides in the cell membrane. Its subcellular location is the cytoplasm. Functionally, shows growth cone collapsing activity on dorsal root ganglion (DRG) neurons in vitro. May be a stop signal for the DRG neurons in their target areas, and possibly also for other neurons. May also be involved in the maintenance and remodeling of neuronal connections. Ligand of TREM2 with PLXNA1 as coreceptor in dendritic cells, plays a role in the generation of immune responses and skeletal homeostasis. This is Semaphorin-6D from Homo sapiens (Human).